A 280-amino-acid polypeptide reads, in one-letter code: MIEVTLLGTGSPIPDPNRAGPSTLVRAGGQVFLVDCGRGVLQRAAAVGVGAAGLSTLLLTHLHSDHVGDLGDVLITRWVSTFTPDPVPLPIIGPPGTAELVAATLNALRHDIGYRIAHHADLNAPPAVDVREHTDGPVWDRDGVSIRVAPTDHRPVAPTIGFRVDYQGASVVLAGDTVPCAGLDELAAGAGALVHTVIRKDIVATIPQQRLQDICDYHSSVEQAAATAARAGVGTLVMTHYVPALVAGQEEQWRALAAREFAGRVELGDDLHRVQVDAPS.

Residues histidine 61, histidine 63, aspartate 65, histidine 66, histidine 153, aspartate 176, and histidine 240 each coordinate Zn(2+). Aspartate 65 serves as the catalytic Proton acceptor.

The protein belongs to the RNase Z family. Homodimer. The cofactor is Zn(2+).

The catalysed reaction is Endonucleolytic cleavage of RNA, removing extra 3' nucleotides from tRNA precursor, generating 3' termini of tRNAs. A 3'-hydroxy group is left at the tRNA terminus and a 5'-phosphoryl group is left at the trailer molecule.. Zinc phosphodiesterase, which displays some tRNA 3'-processing endonuclease activity. Probably involved in tRNA maturation, by removing a 3'-trailer from precursor tRNA. The polypeptide is Ribonuclease Z (Mycobacterium avium (strain 104)).